We begin with the raw amino-acid sequence, 329 residues long: MLNLNKLFEIIEIDIQNSKKISELDKIRIKYLGKKGVLTAFMKKLKDFSYEDKKKHSIIINKKKQEIISKINIKKQKLSVYILEQRIKSETIDISLPGRRTEHGGFHPITNTIDYIKNFFLKLGFQSINSPEIEDEYHNFDALNISKYHPARDSHDTFWFDRNRLLRTQTSSMQIRIMKQEKPPIRFIFPGKVYRNDYDITHTPMFHQIEGLIVDKNINFSNLKWIIYKFLYDFFGKEVLIKFRPSYFPFTVPSAEVDIIDHNGKSLEILGCGMVHPNVLKNVNIDSKIYSACAFGLGIERIAMLRYGITDIRSFFENDIRFLKQFKYN.

The protein belongs to the class-II aminoacyl-tRNA synthetase family. Phe-tRNA synthetase alpha subunit type 1 subfamily. As to quaternary structure, tetramer of two alpha and two beta subunits. The cofactor is Mg(2+).

The protein localises to the cytoplasm. The enzyme catalyses tRNA(Phe) + L-phenylalanine + ATP = L-phenylalanyl-tRNA(Phe) + AMP + diphosphate + H(+). This is Phenylalanine--tRNA ligase alpha subunit (pheS) from Buchnera aphidicola subsp. Acyrthosiphon pisum (strain APS) (Acyrthosiphon pisum symbiotic bacterium).